Reading from the N-terminus, the 247-residue chain is MADS-box transcription factor 1 (247 aa).

Positions 1 to 61 (MGRGRVELKR…GKLYEFCSTS (61 aa)) constitute an MADS-box domain. Residues 91–181 (ELSSQQEYLK…RQRMEGYQIN (91 aa)) form the K-box domain.

In terms of tissue distribution, expressed abundantly in the seed coat and to lesser extent in young buds, carpels, petals, and stamen.

It is found in the nucleus. Functionally, probable transcription factor. The polypeptide is MADS-box transcription factor 1 (Pisum sativum (Garden pea)).